We begin with the raw amino-acid sequence, 156 residues long: Small ribosomal subunit protein uS7 (156 aa).

This sequence belongs to the universal ribosomal protein uS7 family. As to quaternary structure, part of the 30S ribosomal subunit. Contacts proteins S9 and S11.

One of the primary rRNA binding proteins, it binds directly to 16S rRNA where it nucleates assembly of the head domain of the 30S subunit. Is located at the subunit interface close to the decoding center, probably blocks exit of the E-site tRNA. The sequence is that of Small ribosomal subunit protein uS7 from Syntrophomonas wolfei subsp. wolfei (strain DSM 2245B / Goettingen).